Reading from the N-terminus, the 868-residue chain is LPS-assembly protein LptD (868 aa).

The first 24 residues, 1 to 24 (MLKGIHKYLLMCFGTVLFTVQANA), serve as a signal peptide directing secretion.

This sequence belongs to the LptD family. In terms of assembly, component of the lipopolysaccharide transport and assembly complex. Interacts with LptE and LptA.

It localises to the cell outer membrane. In terms of biological role, together with LptE, is involved in the assembly of lipopolysaccharide (LPS) at the surface of the outer membrane. The sequence is that of LPS-assembly protein LptD from Francisella tularensis subsp. holarctica (strain LVS).